A 663-amino-acid polypeptide reads, in one-letter code: MIDKRDFKAFKLVSKYDPSGDQPQAIEALVDNIEGGEKAQILLGATGTGKTYTMSQVISKVNKPTLVIAHNKTLAGQLYGEFKEFFPENAVEYFVSYYDYYQPEAYVPSSDTYIEKDSSVNDEIDKLRHSATSSLLERNDVIVVASVSCIYGLGSPKEYADSAVSLRPGQEISRDQLLNALVDIQFERNDIDFQRGRFRVRGDVVEVFPASRDEHAFRIEFFGDEIDRIREIESLTGKVLGDADHLVLFPATHFVTNDEHMEQSISKIQAELADQLKLFEAEGKLLEAQRLRQRTEYDIEMLREMGYTNGVENYSRHMDGRSAGEPPYTLLDFFPEDFLIMIDESHMTMGQIKGMYNGDKARKQMLVDYGFRLPSALDNRPLRREEFESHVHQIVYVSATPGDYEMEQTDTIVEQIIRPTGLLDPEVEVRPSMGQMDDLLGEINLRIERGERTFITTLTKKMAEDLTDYLKEMGVKVKYMHSDIKTLERTEIIRDLRLGVFDVLIGINLLREGIDVPEVSLVAILDADKEGFLRNERGLIQTIGRAARNADGHVIMYADRMTDSMQRAIDETARRRAIQMAYNEEHGIIPQTIKKDIRDLISISRAVEAKATEAETNYESMTRSERQEAIKQLQKNMQEAAELLDFELAAQLRDLILELKAMD.

Residues 31–271 enclose the Helicase ATP-binding domain; it reads DNIEGGEKAQ…EQSISKIQAE (241 aa). ATP is bound at residue 44 to 51; it reads GATGTGKT. Residues 97–120 carry the Beta-hairpin motif; it reads YYDYYQPEAYVPSSDTYIEKDSSV. The Helicase C-terminal domain occupies 435 to 601; the sequence is QMDDLLGEIN…TIKKDIRDLI (167 aa). Positions 627–662 constitute a UVR domain; that stretch reads QEAIKQLQKNMQEAAELLDFELAAQLRDLILELKAM.

It belongs to the UvrB family. In terms of assembly, forms a heterotetramer with UvrA during the search for lesions. Interacts with UvrC in an incision complex.

Its subcellular location is the cytoplasm. Functionally, the UvrABC repair system catalyzes the recognition and processing of DNA lesions. A damage recognition complex composed of 2 UvrA and 2 UvrB subunits scans DNA for abnormalities. Upon binding of the UvrA(2)B(2) complex to a putative damaged site, the DNA wraps around one UvrB monomer. DNA wrap is dependent on ATP binding by UvrB and probably causes local melting of the DNA helix, facilitating insertion of UvrB beta-hairpin between the DNA strands. Then UvrB probes one DNA strand for the presence of a lesion. If a lesion is found the UvrA subunits dissociate and the UvrB-DNA preincision complex is formed. This complex is subsequently bound by UvrC and the second UvrB is released. If no lesion is found, the DNA wraps around the other UvrB subunit that will check the other stand for damage. In Streptococcus equi subsp. zooepidemicus (strain H70), this protein is UvrABC system protein B.